The chain runs to 397 residues: uncharacterized protein (397 aa).

4 helical membrane passes run 255 to 275, 284 to 304, 308 to 328, and 370 to 390; these read LLTY…ICYA, MITF…VLLA, LITA…PLPL, and VLLV…YCLG.

The protein resides in the cell membrane. This is an uncharacterized protein from Methanocaldococcus jannaschii (strain ATCC 43067 / DSM 2661 / JAL-1 / JCM 10045 / NBRC 100440) (Methanococcus jannaschii).